A 91-amino-acid chain; its full sequence is Small ribosomal subunit protein uS19c (91 aa).

It belongs to the universal ribosomal protein uS19 family.

It is found in the plastid. The protein resides in the organellar chromatophore. In terms of biological role, protein S19 forms a complex with S13 that binds strongly to the 16S ribosomal RNA. In Paulinella chromatophora, this protein is Small ribosomal subunit protein uS19c.